We begin with the raw amino-acid sequence, 266 residues long: UPF0328 protein ECU03_0130 (266 aa).

This sequence belongs to the UPF0328 family.

The protein is UPF0328 protein ECU03_0130 of Encephalitozoon cuniculi (strain GB-M1) (Microsporidian parasite).